A 758-amino-acid chain; its full sequence is 5-methyltetrahydropteroyltriglutamate--homocysteine methyltransferase (758 aa).

5-methyltetrahydropteroyltri-L-glutamate is bound by residues 16–19 (RELK) and Lys-112. L-homocysteine is bound by residues 433-435 (IGS) and Glu-486. L-methionine contacts are provided by residues 433-435 (IGS) and Glu-486. 5-methyltetrahydropteroyltri-L-glutamate contacts are provided by residues 517 to 518 (RC) and Trp-563. L-homocysteine is bound at residue Asp-601. Asp-601 is an L-methionine binding site. Glu-607 is a binding site for 5-methyltetrahydropteroyltri-L-glutamate. Zn(2+) contacts are provided by His-643, Cys-645, and Glu-667. Residue His-696 is the Proton donor of the active site. Cys-728 is a Zn(2+) binding site.

Belongs to the vitamin-B12 independent methionine synthase family. Zn(2+) serves as cofactor.

The enzyme catalyses 5-methyltetrahydropteroyltri-L-glutamate + L-homocysteine = tetrahydropteroyltri-L-glutamate + L-methionine. Its pathway is amino-acid biosynthesis; L-methionine biosynthesis via de novo pathway; L-methionine from L-homocysteine (MetE route): step 1/1. Functionally, catalyzes the transfer of a methyl group from 5-methyltetrahydrofolate to homocysteine resulting in methionine formation. This chain is 5-methyltetrahydropteroyltriglutamate--homocysteine methyltransferase, found in Neisseria meningitidis serogroup C (strain 053442).